The primary structure comprises 324 residues: Deoxyhypusine hydroxylase (324 aa).

2 HEAT-like PBS-type repeats span residues 60-86 and 94-119; these read LKHE…VLED and RHEA…YLHR. Residues H62, E63, H95, and E96 each contribute to the Fe cation site. The segment covering 143-152 has biased composition (basic and acidic residues); it reads EERKQEKLRQ. Residues 143–171 are disordered; it reads EERKQEKLRQSDFASVDPAPPMPEDDEKQ. HEAT-like PBS-type repeat units follow at residues 189 to 219, 227 to 253, and 260 to 287; these read KRYR…LAKG, FRHE…ALSN, and VRHE…FLHD. H229, E230, H262, and E263 together coordinate Fe cation.

The protein belongs to the deoxyhypusine hydroxylase family. Fe(2+) is required as a cofactor.

The protein localises to the cytoplasm. The protein resides in the nucleus. The catalysed reaction is [eIF5A protein]-deoxyhypusine + AH2 + O2 = [eIF5A protein]-hypusine + A + H2O. It participates in protein modification; eIF5A hypusination. In terms of biological role, catalyzes the hydroxylation of the N(6)-(4-aminobutyl)-L-lysine intermediate to form hypusine, an essential post-translational modification only found in mature eIF-5A factor. The sequence is that of Deoxyhypusine hydroxylase (lia1) from Neurospora crassa (strain ATCC 24698 / 74-OR23-1A / CBS 708.71 / DSM 1257 / FGSC 987).